The sequence spans 348 residues: Uroporphyrinogen decarboxylase (348 aa).

Substrate contacts are provided by residues 28 to 32 (RQAGR), Asp-78, Tyr-154, Thr-209, and His-325.

This sequence belongs to the uroporphyrinogen decarboxylase family. Homodimer.

The protein resides in the cytoplasm. The catalysed reaction is uroporphyrinogen III + 4 H(+) = coproporphyrinogen III + 4 CO2. It participates in porphyrin-containing compound metabolism; protoporphyrin-IX biosynthesis; coproporphyrinogen-III from 5-aminolevulinate: step 4/4. Catalyzes the decarboxylation of four acetate groups of uroporphyrinogen-III to yield coproporphyrinogen-III. The chain is Uroporphyrinogen decarboxylase from Rhodopseudomonas palustris (strain HaA2).